We begin with the raw amino-acid sequence, 404 residues long: Serine/threonine-protein phosphatase 2A regulatory subunit rsa-1 (404 aa).

Part of a complex consisting of a common heterodimeric core enzyme, composed of catalytic subunit let-92 and constant regulatory subunit paa-1, that associates with a variety of regulatory subunits which confer distinct properties to the holoenzyme. Interacts with rsa-2, spd-5 and tpxl-1.

It is found in the cytoplasm. The protein resides in the cytoskeleton. Its subcellular location is the microtubule organizing center. The protein localises to the centrosome. Regulatory subunit of phosphatase let-92 which recruits let-92/paa-1 complex to the centrosomes, thereby regulating microtubule outgrowth from centrosomes and mitotic spindle assembly ensuring the stability of kinetochore microtubules. The sequence is that of Serine/threonine-protein phosphatase 2A regulatory subunit rsa-1 from Caenorhabditis elegans.